The following is a 689-amino-acid chain: Glycine--tRNA ligase beta subunit (689 aa).

It belongs to the class-II aminoacyl-tRNA synthetase family. In terms of assembly, tetramer of two alpha and two beta subunits.

It is found in the cytoplasm. It catalyses the reaction tRNA(Gly) + glycine + ATP = glycyl-tRNA(Gly) + AMP + diphosphate. This Acinetobacter baumannii (strain ACICU) protein is Glycine--tRNA ligase beta subunit.